Reading from the N-terminus, the 204-residue chain is Proteasome subunit beta type-3 (204 aa).

It belongs to the peptidase T1B family. In terms of assembly, the 26S proteasome consists of a 20S proteasome core and two 19S regulatory subunits. The 20S proteasome core is composed of 28 subunits that are arranged in four stacked rings, resulting in a barrel-shaped structure. The two end rings are each formed by seven alpha subunits, and the two central rings are each formed by seven beta subunits. The catalytic chamber with the active sites is on the inside of the barrel.

It localises to the cytoplasm. The protein resides in the nucleus. In terms of biological role, non-catalytic component of the proteasome, a multicatalytic proteinase complex which is characterized by its ability to cleave peptides with Arg, Phe, Tyr, Leu, and Glu adjacent to the leaving group at neutral or slightly basic pH. The proteasome has an ATP-dependent proteolytic activity. The protein is Proteasome subunit beta type-3 (PBC1) of Picea mariana (Black spruce).